Reading from the N-terminus, the 748-residue chain is Subtilisin-like protease (748 aa).

Residues 1–24 (MMKMELRLLVSLIFILCSISMLAA) form the signal peptide. Positions 37-115 (TYIVHVKKSE…ARPERTLELH (79 aa)) constitute an Inhibitor I9 domain. The region spanning 122–600 (FLGLKQGQGL…AGHVNPVKAN (479 aa)) is the Peptidase S8 domain. Catalysis depends on charge relay system residues aspartate 147 and histidine 206. Positions 365–454 (PLVYPGSFGY…VEVSYAAGLT (90 aa)) constitute a PA domain. Asparagine 376, asparagine 380, and asparagine 405 each carry an N-linked (GlcNAc...) asparagine glycan. Serine 533 serves as the catalytic Charge relay system. Residues asparagine 675 and asparagine 722 are each glycosylated (N-linked (GlcNAc...) asparagine).

It belongs to the peptidase S8 family.

The protein resides in the secreted. Its subcellular location is the extracellular space. The protein localises to the apoplast. Required for arbuscular mycorrhiza (AM) development during AM symbiosis with AM fungi (e.g. Glomeromycota intraradices). The sequence is that of Subtilisin-like protease from Medicago truncatula (Barrel medic).